We begin with the raw amino-acid sequence, 264 residues long: 5'-nucleotidase SurE (264 aa).

A divalent metal cation contacts are provided by D10, D11, S43, and N99.

Belongs to the SurE nucleotidase family. The cofactor is a divalent metal cation.

It localises to the cytoplasm. It catalyses the reaction a ribonucleoside 5'-phosphate + H2O = a ribonucleoside + phosphate. Its function is as follows. Nucleotidase that shows phosphatase activity on nucleoside 5'-monophosphates. This is 5'-nucleotidase SurE from Methanococcus maripaludis (strain C6 / ATCC BAA-1332).